Consider the following 682-residue polypeptide: Probable methyltransferase PMT12 (682 aa).

The Cytoplasmic segment spans residues 1 to 11; it reads MKLFLNSNLLR. Residues 12–32 traverse the membrane as a helical; Signal-anchor for type II membrane protein segment; it reads NSIFFKISAFVLISVACFFLG. Topologically, residues 33–682 are lumenal; that stretch reads KHWSEDGFRR…KRRKTKGKRA (650 aa). N-linked (GlcNAc...) asparagine glycosylation is found at Asn-67, Asn-103, Asn-125, Asn-155, Asn-173, Asn-193, Asn-273, Asn-350, Asn-395, Asn-419, Asn-600, and Asn-625.

It belongs to the methyltransferase superfamily.

It localises to the golgi apparatus membrane. The chain is Probable methyltransferase PMT12 from Arabidopsis thaliana (Mouse-ear cress).